Here is a 532-residue protein sequence, read N- to C-terminus: MKNGSISPVVLIILDGWGYREEKYGNAIAVGKTPNIDSLWQAYPRTLIQASGKAVGLPEGQMGNSEVGHLNIGAGRVVPQELVRISDAIEDGLIVQNQAIKKICQDVIERNSKLHLVGLCSSGGVHSHVNHLLGLLDVAKAKGISDVCVHAITDGRDTNPKSGLHVLKQIEYHTNQIGIGRIATVSGRYYAMDRDKRWDRIQKAYEVMTQDGYGTGCSASDLLQKSYAEGITDEFVLPVRVAPGAVEPGDGVIFFNFRPDRARQLTQAFVAPDFNGFERQTIQPLTFLTFTQYDSSFPVLVAFEPQNFNNILGQVISQHGLRQFRTAETEKYAHVTYFFNGGLEQPFEGEDRELVQSPMVSHYDEAPEMSAEDLTEVAIAAVKKQIYSLIVINYANPDMVGHTGAMDAAVNAVQTVDHCLGKLLQGISKVGGTAIIIADHGNAEYMWDEDGNPWTAHTTNLVPFILIEGEVSKIPGHGTKVPLRENGCLADIAPTILEILNLPQPAEMTGKSIIKKAEYELKPNRTPVRVGL.

Mn(2+)-binding residues include Asp15 and Ser65. The active-site Phosphoserine intermediate is Ser65. Residues His126, Arg156–Asp157, Arg188, Arg194, Arg258–Arg261, and Lys331 contribute to the substrate site. Mn(2+) is bound by residues Asp398, His402, Asp439, His440, and His457.

It belongs to the BPG-independent phosphoglycerate mutase family. Monomer. Mn(2+) serves as cofactor.

The catalysed reaction is (2R)-2-phosphoglycerate = (2R)-3-phosphoglycerate. Its pathway is carbohydrate degradation; glycolysis; pyruvate from D-glyceraldehyde 3-phosphate: step 3/5. Catalyzes the interconversion of 2-phosphoglycerate and 3-phosphoglycerate. The chain is 2,3-bisphosphoglycerate-independent phosphoglycerate mutase from Trichodesmium erythraeum (strain IMS101).